We begin with the raw amino-acid sequence, 623 residues long: F-box protein FBX14 (623 aa).

The segment at 18–48 is disordered; the sequence is LNLNPPCSSSSSSSSAATFTNKSRNFKSSPP. The span at 33-45 shows a compositional bias: polar residues; that stretch reads AATFTNKSRNFKS. In terms of domain architecture, F-box spans 54–97; sequence VLENVLENVLQFLTSRCDRNAVSLVCRSWYRVEAQTRLEVFIGN. Residue lysine 119 coordinates 1D-myo-inositol hexakisphosphate. The tract at residues 126-127 is interaction with auxin-responsive proteins; it reads DF. 1D-myo-inositol hexakisphosphate-binding positions include 158-159 and arginine 391; that span reads KR. An interaction with auxin-responsive proteins region spans residues 394–399; sequence PFDPRE. Residue 447-449 participates in 1D-myo-inositol hexakisphosphate binding; it reads VFR. An interaction with auxin-responsive proteins region spans residues 451-455; it reads CIMGR. Arginine 482 contributes to the 1D-myo-inositol hexakisphosphate binding site. Residues 510 to 511 are interaction with auxin-responsive proteins; that stretch reads AF. Residues 530-531 and arginine 555 each bind 1D-myo-inositol hexakisphosphate; that span reads QK.

As to quaternary structure, part of a SCF (SKP1-cullin-F-box) protein ligase complex. May interact with auxin and auxin-responsive proteins.

Its subcellular location is the nucleus. Its pathway is protein modification; protein ubiquitination. The polypeptide is F-box protein FBX14 (FBX14) (Arabidopsis thaliana (Mouse-ear cress)).